Reading from the N-terminus, the 399-residue chain is 1-deoxy-D-xylulose 5-phosphate reductoisomerase (399 aa).

NADPH contacts are provided by Thr13, Gly14, Ser15, Ile16, and Asn127. Lys128 provides a ligand contact to 1-deoxy-D-xylulose 5-phosphate. Position 129 (Glu129) interacts with NADPH. A Mn(2+)-binding site is contributed by Asp153. Ser154, Glu155, Ser187, and His210 together coordinate 1-deoxy-D-xylulose 5-phosphate. Position 155 (Glu155) interacts with Mn(2+). Gly216 is an NADPH binding site. 1-deoxy-D-xylulose 5-phosphate-binding residues include Ser223, Asn228, Lys229, and Glu232. Position 232 (Glu232) interacts with Mn(2+).

It belongs to the DXR family. Mg(2+) is required as a cofactor. Mn(2+) serves as cofactor.

The catalysed reaction is 2-C-methyl-D-erythritol 4-phosphate + NADP(+) = 1-deoxy-D-xylulose 5-phosphate + NADPH + H(+). It participates in isoprenoid biosynthesis; isopentenyl diphosphate biosynthesis via DXP pathway; isopentenyl diphosphate from 1-deoxy-D-xylulose 5-phosphate: step 1/6. Its function is as follows. Catalyzes the NADPH-dependent rearrangement and reduction of 1-deoxy-D-xylulose-5-phosphate (DXP) to 2-C-methyl-D-erythritol 4-phosphate (MEP). The protein is 1-deoxy-D-xylulose 5-phosphate reductoisomerase of Bordetella parapertussis (strain 12822 / ATCC BAA-587 / NCTC 13253).